Consider the following 150-residue polypeptide: UPF0260 protein PputGB1_4117 (150 aa).

It belongs to the UPF0260 family.

The protein is UPF0260 protein PputGB1_4117 of Pseudomonas putida (strain GB-1).